The sequence spans 91 residues: Acylphosphatase (91 aa).

An Acylphosphatase-like domain is found at 5-91; that stretch reads CLHAYVGGRV…QGIAGFIVRR (87 aa). Residues R20 and N38 contribute to the active site.

It belongs to the acylphosphatase family.

The catalysed reaction is an acyl phosphate + H2O = a carboxylate + phosphate + H(+). This is Acylphosphatase (acyP) from Pseudomonas paraeruginosa (strain DSM 24068 / PA7) (Pseudomonas aeruginosa (strain PA7)).